The following is a 44-amino-acid chain: MSYKCSRCKRDVELEEYGGVRCPFCGHRVLLKERAPEIKEVPVE.

The Zn(2+) site is built by C8, C22, and C25.

The protein belongs to the archaeal Rpo12/eukaryotic RPC10 RNA polymerase subunit family. In terms of assembly, part of the RNA polymerase complex. Requires Zn(2+) as cofactor.

The protein localises to the cytoplasm. The enzyme catalyses RNA(n) + a ribonucleoside 5'-triphosphate = RNA(n+1) + diphosphate. Its function is as follows. DNA-dependent RNA polymerase (RNAP) catalyzes the transcription of DNA into RNA using the four ribonucleoside triphosphates as substrates. The chain is DNA-directed RNA polymerase subunit Rpo12 from Haloquadratum walsbyi (strain DSM 16790 / HBSQ001).